A 542-amino-acid polypeptide reads, in one-letter code: Phenylacetone monooxygenase (542 aa).

FAD contacts are provided by residues Ser-27, Glu-46, 54-57 (VWYW), Asp-66, Tyr-72, Val-119, and Gln-152. Residue 64–66 (RCD) coordinates NADP(+). Residues 194–200 (TGSSGIQ), 217–218 (RT), and 336–337 (KR) each bind NADP(+). Met-446 serves as a coordination point for FAD. Position 501 (Trp-501) interacts with NADP(+).

Belongs to the FAD-binding monooxygenase family. As to quaternary structure, monomer. It depends on FAD as a cofactor.

The catalysed reaction is phenylacetone + NADPH + O2 + H(+) = benzyl acetate + NADP(+) + H2O. Catalyzes a Baeyer-Villiger oxidation reaction, i.e. the insertion of an oxygen atom into a carbon-carbon bond adjacent to a carbonyl, which converts ketones to esters. Is most efficient with phenylacetone as substrate, leading to the formation of benzyl acetate. Can also oxidize other aromatic ketones (benzylacetone, alpha-methylphenylacetone and 4-hydroxyacetophenone), some aliphatic ketones (dodecan-2-one and bicyclohept-2-en-6-one) and sulfides (e.g. methyl 4-tolylsulfide). This Thermobifida fusca (strain YX) protein is Phenylacetone monooxygenase (pamO).